The primary structure comprises 269 residues: Phosphonoacetaldehyde hydrolase (269 aa).

Asp-10 serves as the catalytic Nucleophile. Mg(2+)-binding residues include Asp-10 and Ala-12. Catalysis depends on Lys-52, which acts as the Schiff-base intermediate with substrate. Asp-186 lines the Mg(2+) pocket.

This sequence belongs to the HAD-like hydrolase superfamily. PhnX family. In terms of assembly, homodimer. Requires Mg(2+) as cofactor.

The enzyme catalyses phosphonoacetaldehyde + H2O = acetaldehyde + phosphate + H(+). Functionally, involved in phosphonate degradation. This is Phosphonoacetaldehyde hydrolase from Salmonella heidelberg (strain SL476).